We begin with the raw amino-acid sequence, 371 residues long: Homoserine O-acetyltransferase (371 aa).

Residues 44–350 enclose the AB hydrolase-1 domain; the sequence is NAILVEHAWT…SYGHDAFLLE (307 aa). Residue serine 150 is the Nucleophile of the active site. Arginine 217 is a binding site for substrate. Residues aspartate 311 and histidine 344 contribute to the active site. A substrate-binding site is contributed by aspartate 345.

It belongs to the AB hydrolase superfamily. MetX family. As to quaternary structure, homodimer.

It localises to the cytoplasm. It carries out the reaction L-homoserine + acetyl-CoA = O-acetyl-L-homoserine + CoA. It functions in the pathway amino-acid biosynthesis; L-methionine biosynthesis via de novo pathway; O-acetyl-L-homoserine from L-homoserine: step 1/1. Its function is as follows. Transfers an acetyl group from acetyl-CoA to L-homoserine, forming acetyl-L-homoserine. The sequence is that of Homoserine O-acetyltransferase from Pelobacter propionicus (strain DSM 2379 / NBRC 103807 / OttBd1).